Reading from the N-terminus, the 464-residue chain is D-inositol 3-phosphate glycosyltransferase (464 aa).

The span at 1–20 (MEGAPRRPDRHARSEEERHV) shows a compositional bias: basic and acidic residues. Residues 1–44 (MEGAPRRPDRHARSEEERHVSQYASRLGRRSPAAPTRRRMLRKP) form a disordered region. Residue His-53 participates in 1D-myo-inositol 3-phosphate binding. Residues 59–60 (QP) and Gly-67 each bind UDP-N-acetyl-alpha-D-glucosamine. Residues 64–69 (DAGGMN), Lys-122, Tyr-155, Thr-179, and Arg-199 each bind 1D-myo-inositol 3-phosphate. The UDP-N-acetyl-alpha-D-glucosamine site is built by Arg-274, Lys-279, and Val-340. Positions 349, 350, and 352 each coordinate Mg(2+). UDP-N-acetyl-alpha-D-glucosamine contacts are provided by Glu-362 and Glu-370. Thr-376 contributes to the Mg(2+) binding site.

Belongs to the glycosyltransferase group 1 family. MshA subfamily. In terms of assembly, homodimer.

It carries out the reaction 1D-myo-inositol 3-phosphate + UDP-N-acetyl-alpha-D-glucosamine = 1D-myo-inositol 2-acetamido-2-deoxy-alpha-D-glucopyranoside 3-phosphate + UDP + H(+). In terms of biological role, catalyzes the transfer of a N-acetyl-glucosamine moiety to 1D-myo-inositol 3-phosphate to produce 1D-myo-inositol 2-acetamido-2-deoxy-glucopyranoside 3-phosphate in the mycothiol biosynthesis pathway. The protein is D-inositol 3-phosphate glycosyltransferase of Streptomyces avermitilis (strain ATCC 31267 / DSM 46492 / JCM 5070 / NBRC 14893 / NCIMB 12804 / NRRL 8165 / MA-4680).